A 428-amino-acid polypeptide reads, in one-letter code: MIARETLADELALARERTLRLVEFDDAELHRQYNPLMSPLVWDLAHIGQQEELWLLRDGNPDRPGMLAPEVDRLYDAFEHSRASRVNLPLLPPSDARAYCATVRAKALDTLDTLPEDDPGFRFALVISHENQHDETMLQALNLREGPPLLDTGIPLPAGRPGVAGTSVLVPGGPFVLGVDALTEPHSLDNERPAHVVDIPSFRIGRVPVTNAEWREFIDDGGYDQPRWWSPRGWAHRQEAGLVAPQFWNPDGTRTRFGHIEEIPGDEPVQHVTFFEAEAYAAWAGARLPTEIEWEKACAWDPVAGARRRFPWGSAQPSAALANLGGDARRPAPVGAYPAGASAYGAEQMLGDVWEWTSSPLRPWPGFTPMIYERYSTPFFEGTTSGDYRVLRGGSWAVAPGILRPSFRNWDHPIRRQIFSGVRLAWDV.

A Fe cation-binding site is contributed by His-46. Position 82–85 (82–85 (RASR)) interacts with gamma-L-glutamyl-L-cysteine. Residues His-129 and His-133 each contribute to the Fe cation site. The gamma-L-glutamyl-L-cysteine site is built by Asp-411 and Arg-415.

The protein belongs to the EgtB family. In terms of assembly, monomer. Fe(2+) serves as cofactor.

It carries out the reaction gamma-L-glutamyl-L-cysteine + hercynine + O2 = gamma-L-glutamyl-hercynylcysteine S-oxide + H2O. It participates in amino-acid biosynthesis; ergothioneine biosynthesis. Its function is as follows. Catalyzes the oxidative sulfurization of hercynine (N-alpha,N-alpha,N-alpha-trimethyl-L-histidine) into hercynyl-gamma-L-glutamyl-L-cysteine sulfoxide, a step in the biosynthesis pathway of ergothioneine. Cannot use the alternative thiols cysteine, N-acetylcysteine, or glutathione instead of gamma-glutamylcysteine as substrates, and histidine is a poor sulfur acceptor substrate compared to hercynine. The sequence is that of Hercynine oxygenase from Mycolicibacterium smegmatis (strain ATCC 700084 / mc(2)155) (Mycobacterium smegmatis).